The sequence spans 490 residues: GTPase Der (490 aa).

EngA-type G domains follow at residues 3–167 and 203–378; these read FTLA…DAFE and LQVA…EVWN. GTP is bound by residues 9–16, 56–60, 119–122, 209–216, 256–260, and 321–324; these read GRPNVGKS, DTAGL, NKAE, GRPNAGKS, DTAGM, and NKWD. The region spanning 379–465 is the KH-like domain; the sequence is RRVPTAALNR…RLTMRSQSDA (87 aa). The segment at 451–490 is disordered; sequence PGTPIRLTMRSQSDANPYKNRKKSTPSRLRKHLGKPSLKG. Basic residues predominate over residues 469 to 484; that stretch reads KNRKKSTPSRLRKHLG.

It belongs to the TRAFAC class TrmE-Era-EngA-EngB-Septin-like GTPase superfamily. EngA (Der) GTPase family. As to quaternary structure, associates with the 50S ribosomal subunit.

Functionally, GTPase that plays an essential role in the late steps of ribosome biogenesis. This chain is GTPase Der, found in Dinoroseobacter shibae (strain DSM 16493 / NCIMB 14021 / DFL 12).